The following is a 44-amino-acid chain: uncharacterized protein (44 aa).

This is an uncharacterized protein from Caenorhabditis elegans.